The primary structure comprises 126 residues: UPF0102 protein Cphamn1_0017 (126 aa).

This sequence belongs to the UPF0102 family.

The polypeptide is UPF0102 protein Cphamn1_0017 (Chlorobium phaeobacteroides (strain BS1)).